We begin with the raw amino-acid sequence, 340 residues long: Insulin gene enhancer protein ISL-2B (340 aa).

2 consecutive LIM zinc-binding domains span residues 9–62 (CVGC…CKRD) and 71–125 (CAKC…RADH). Residues 172 to 231 (TTRVRTVLNEKQLHTLRTCYNANPRPDALMKEQLVEMTGLSPRVIRVWFQNKRCKDKKRT) constitute a DNA-binding region (homeobox). A compositionally biased stretch (low complexity) spans 307–317 (ESGSMGNSSGS). Positions 307-340 (ESGSMGNSSGSDVTSLSSQLPDTPNSMVPSPMDT) are disordered. The span at 318 to 340 (DVTSLSSQLPDTPNSMVPSPMDT) shows a compositional bias: polar residues.

The protein localises to the nucleus. Binds to one of the cis-acting domain of the insulin gene enhancer. May be involved in subtype specialization of primary motoneurons. This Oncorhynchus tshawytscha (Chinook salmon) protein is Insulin gene enhancer protein ISL-2B (isl2b).